Consider the following 76-residue polypeptide: Rhesus theta defensin-1/2 subunit B (76 aa).

The first 22 residues, 1-22 (MRTFALLTAMLLLVALHAQAEA), serve as a signal peptide directing secretion. Residues 23-64 (RQARADEAAAQQQPGADDQGMAHSFTRPENAALPLSESARGL) constitute a propeptide that is removed on maturation. Positions 25 to 54 (ARADEAAAQQQPGADDQGMAHSFTRPENAA) are disordered. Low complexity predominate over residues 30–44 (AAAQQQPGADDQGMA). A Cyclopeptide (Arg-Cys) (interchain with C-73 in subunit A); in form RTD-1 cross-link involves residue arginine 65. Arginine 65 is covalently cross-linked (Cyclopeptide (Arg-Cys) (interchain with C-73 in subunit B); in form RTD-2). Cysteines 68 and 73 form a disulfide. A Cyclopeptide (Cys-Arg) (interchain with R-65 in subunit A); in form RTD-1 cross-link involves residue cysteine 73. Residue cysteine 73 forms a Cyclopeptide (Cys-Arg) (interchain with R-65 in subunit B); in form RTD-2 linkage. The propeptide occupies 74 to 76 (QLL).

The protein belongs to the alpha-defensin family. Theta subfamily. As to quaternary structure, RTD-1 is a cyclic heterodimer composed of subunits A and B; disulfide-linked. RTD-2 is a cyclic homodimer composed of two subunits B; disulfide-linked. In terms of processing, forms a cyclic peptide with 1 subunit B (RTD-2) or with 1 subunit A (RTD-1). An additional intersubunit disulfide bond is formed. As to expression, RTD-1 is expressed in bone marrow. Detected in promyelocytes, myelocytes and mature neutrophils and monocytes.

Its function is as follows. RTD-1 and RTD-2 have similar antimicrobial activities against the Gram-positive bacteria S.aureus 502A and L.monocytogenes, the Gram-negative bacterium S.typhimurium, and the fungi C.albicans 16820 and C.neoformans 271A. RTD-2 is 2-3-fold less active than RTD-1 against E.coli ML35. The protein is Rhesus theta defensin-1/2 subunit B (RTD1B) of Macaca mulatta (Rhesus macaque).